We begin with the raw amino-acid sequence, 351 residues long: Protein RecA (351 aa).

68–75 lines the ATP pocket; sequence GPESSGKT.

It belongs to the RecA family.

It localises to the cytoplasm. Can catalyze the hydrolysis of ATP in the presence of single-stranded DNA, the ATP-dependent uptake of single-stranded DNA by duplex DNA, and the ATP-dependent hybridization of homologous single-stranded DNAs. It interacts with LexA causing its activation and leading to its autocatalytic cleavage. This Thermotoga neapolitana (strain ATCC 49049 / DSM 4359 / NBRC 107923 / NS-E) protein is Protein RecA.